We begin with the raw amino-acid sequence, 120 residues long: Large ribosomal subunit protein bL12 (120 aa).

It belongs to the bacterial ribosomal protein bL12 family. Homodimer. Part of the ribosomal stalk of the 50S ribosomal subunit. Forms a multimeric L10(L12)X complex, where L10 forms an elongated spine to which 2 to 4 L12 dimers bind in a sequential fashion. Binds GTP-bound translation factors.

In terms of biological role, forms part of the ribosomal stalk which helps the ribosome interact with GTP-bound translation factors. Is thus essential for accurate translation. In Brevibacillus brevis (strain 47 / JCM 6285 / NBRC 100599), this protein is Large ribosomal subunit protein bL12.